Here is a 74-residue protein sequence, read N- to C-terminus: UPF0352 protein HAPS_0210 (74 aa).

The protein belongs to the UPF0352 family.

In Glaesserella parasuis serovar 5 (strain SH0165) (Haemophilus parasuis), this protein is UPF0352 protein HAPS_0210.